A 1894-amino-acid chain; its full sequence is Plexin-A2 (1894 aa).

The signal sequence occupies residues 1–34 (MEQRRPWPRALEVDSRSVVLLSVVWVLLAPPAAG). Positions 35–508 (MPQFSTFHSE…SERQVTRVPV (474 aa)) constitute a Sema domain. The Extracellular portion of the chain corresponds to 35-1237 (MPQFSTFHSE…VISDSLLTLP (1203 aa)). N-linked (GlcNAc...) asparagine glycans are attached at residues Asn76 and Asn91. 10 disulfides stabilise this stretch: Cys94-Cys103, Cys129-Cys137, Cys284-Cys405, Cys300-Cys356, Cys374-Cys393, Cys511-Cys528, Cys517-Cys559, Cys520-Cys537, Cys531-Cys543, and Cys594-Cys613. N-linked (GlcNAc...) asparagine glycosylation is present at Asn327. N-linked (GlcNAc...) asparagine glycosylation is found at Asn598, Asn696, and Asn756. 4 consecutive IPT/TIG domains span residues 858-951 (PQIT…QYTF), 954-1037 (PSVL…QFEY), 1041-1139 (PRVQ…KFIY), and 1143-1228 (PTFE…SVSV). Residue Asn1205 is glycosylated (N-linked (GlcNAc...) asparagine). The helical transmembrane segment at 1238–1258 (AIVSIAAGGSLLLIIVIIVLI) threads the bilayer. The Cytoplasmic segment spans residues 1259 to 1894 (AYKRKSREND…QLINAMSIES (636 aa)). Residues 1261–1310 (KRKSRENDLTLKRLQMQMDNLESRVALECKEAFAELQTDINELTSDLDRS) adopt a coiled-coil conformation. Ser1612 is subject to Phosphoserine.

This sequence belongs to the plexin family. In terms of assembly, homodimer. The PLXNA2 homodimer interacts with a SEMA6A homodimer, giving rise to a heterotetramer. Interacts directly with NRP1 and NRP2. Interacts with RND1. As to expression, detected in fetal brain.

The protein resides in the cell membrane. Its function is as follows. Coreceptor for SEMA3A and SEMA6A. Necessary for signaling by SEMA6A and class 3 semaphorins and subsequent remodeling of the cytoskeleton. Plays a role in axon guidance, invasive growth and cell migration. Class 3 semaphorins bind to a complex composed of a neuropilin and a plexin. The plexin modulates the affinity of the complex for specific semaphorins, and its cytoplasmic domain is required for the activation of down-stream signaling events in the cytoplasm. In Homo sapiens (Human), this protein is Plexin-A2 (PLXNA2).